Consider the following 1192-residue polypeptide: MFCSEKKLREVERIVKANDREYNEKFQYADNRIHTSKYNILTFLPINLFEQFQRVANAYFLCLLILQLIPEISSLTWFTTIVPLVLVITMTAVKDATDDYFRHKSDNQVNNRQSEVLINSKLQNEKWMNVKVGDIIKLENNQFVAADLLLLSSSEPHGLCYVETAELDGETNLKVRHALSVTSELGADISRLAGFDGIVVCEVPNNKLDKFMGILSWKDSKHSLNNEKIILRGCILRNTSWCFGMVIFAGPDTKLMQNSGKTKFKRTSIDRLMNTLVLWIFGFLICLGIILAIGNSIWESQTGDQFRTFLFWNEGEKSSVFSGFLTFWSYIIILNTVVPISLYVSVEVIRLGHSYFINWDRKMYYSRKAIPAVARTTTLNEELGQIEYIFSDKTGTLTQNIMTFKRCSINGRIYGEVHDDLDQKTEITQEKEPVDFSVKSQADREFQFFDHHLMESIKMGDPKVHEFLRLLALCHTVMSEENSAGELIYQVQSPDEGALVTAARNFGFIFKSRTPETITIEELGTLVTYQLLAFLDFNNTRKRMSVIVRNPEGQIKLYSKGADTILFEKLHPSNEVLLSLTSDHLSEFAGEGLRTLAIAYRDLDDKYFKEWHKMLEDANAATEERDERIAGLYEEIERDLMLLGATAVEDKLQEGVIETVTSLSLANIKIWVLTGDKQETAINIGYACNMLTDDMNDVFVIAGNNAVEVREELRKAKQNLFGQNRNFSNGHVVCEKKQQLELDSIVEETITGDYALIINGHSLAHALESDVKNDLLELACMCKTVICCRVTPLQKAQVVELVKKYRNAVTLAIGDGANDVSMIKSAHIGVGISGQEGLQAVLASDYSFAQFRYLQRLLLVHGRWSYFRMCKFLCYFFYKNFAFTLVHFWFGFFCGFSAQTVYDQWFITLFNIVYTSLPVLAMGIFDQDVSDQNSVDCPQLYKPGQLNLLFNKRKFFICVLHGIYTSLVLFFIPYGAFYNVAGEDGQHIADYQSFAVTMATSLVIVVSVQIALDTSYWTFINHVFIWGSIAIYFSILFTMHSNGIFGIFPNQFPFVGNARHSLTQKCIWLVILLTTVASVMPVVAFRFLKVDLYPTLSDQIRRWQKAQKKARPPSSRRPRTRRSSSRRSGYAFAHQEGYGELITSGKNMRAKNPPPTSGLEKTHYNSTSWIENLCKKTTDTVSSFSQDKTVKL.

Residues 1–44 (MFCSEKKLREVERIVKANDREYNEKFQYADNRIHTSKYNILTFL) lie on the Cytoplasmic side of the membrane. Residues 45-66 (PINLFEQFQRVANAYFLCLLIL) form a helical membrane-spanning segment. Topologically, residues 67–72 (QLIPEI) are exoplasmic loop. Residues 73–92 (SSLTWFTTIVPLVLVITMTA) traverse the membrane as a helical segment. The Cytoplasmic portion of the chain corresponds to 93–276 (VKDATDDYFR…TSIDRLMNTL (184 aa)). Residues 277-298 (VLWIFGFLICLGIILAIGNSIW) form a helical membrane-spanning segment. The Exoplasmic loop portion of the chain corresponds to 299 to 327 (ESQTGDQFRTFLFWNEGEKSSVFSGFLTF). A helical membrane pass occupies residues 328–349 (WSYIIILNTVVPISLYVSVEVI). Residues 350 to 871 (RLGHSYFINW…GRWSYFRMCK (522 aa)) are Cytoplasmic-facing. Catalysis depends on Asp392, which acts as the 4-aspartylphosphate intermediate. The ATP site is built by Asp392, Lys393, Thr394, Glu496, Phe537, Lys560, Arg594, Thr674, Gly675, Asp676, Arg789, and Lys795. Residue Asp392 participates in Mg(2+) binding. Thr394 is a binding site for Mg(2+). Residue Asp815 participates in Mg(2+) binding. Asn818 and Asp819 together coordinate ATP. Residue Asp819 participates in Mg(2+) binding. The chain crosses the membrane as a helical span at residues 872–892 (FLCYFFYKNFAFTLVHFWFGF). The Exoplasmic loop segment spans residues 893-904 (FCGFSAQTVYDQ). The chain crosses the membrane as a helical span at residues 905–924 (WFITLFNIVYTSLPVLAMGI). At 925 to 954 (FDQDVSDQNSVDCPQLYKPGQLNLLFNKRK) the chain is on the cytoplasmic side. Residues 955-976 (FFICVLHGIYTSLVLFFIPYGA) traverse the membrane as a helical segment. Residues 977–990 (FYNVAGEDGQHIAD) lie on the Exoplasmic loop side of the membrane. The helical transmembrane segment at 991–1013 (YQSFAVTMATSLVIVVSVQIALD) threads the bilayer. Residues 1014 to 1019 (TSYWTF) lie on the Cytoplasmic side of the membrane. The helical transmembrane segment at 1020–1040 (INHVFIWGSIAIYFSILFTMH) threads the bilayer. At 1041–1060 (SNGIFGIFPNQFPFVGNARH) the chain is on the exoplasmic loop side. A helical transmembrane segment spans residues 1061–1085 (SLTQKCIWLVILLTTVASVMPVVAF). The Cytoplasmic segment spans residues 1086-1192 (RFLKVDLYPT…SFSQDKTVKL (107 aa)). A compositionally biased stretch (basic residues) spans 1104 to 1125 (QKAQKKARPPSSRRPRTRRSSS). Disordered stretches follow at residues 1104–1130 (QKAQKKARPPSSRRPRTRRSSSRRSGY) and 1143–1163 (TSGKNMRAKNPPPTSGLEKTH).

The protein belongs to the cation transport ATPase (P-type) (TC 3.A.3) family. Type IV subfamily. Component of a P4-ATPase flippase complex which consists of a catalytic alpha subunit and an accessory beta subunit. Interacts with beta subunits TMEM30A and TMEM30B. Requires Mg(2+) as cofactor. In terms of tissue distribution, ubiquitously expressed at moderate levels.

The protein localises to the cell membrane. Its subcellular location is the golgi apparatus. It carries out the reaction ATP + H2O + phospholipidSide 1 = ADP + phosphate + phospholipidSide 2.. Component of a P4-ATPase flippase complex which catalyzes the hydrolysis of ATP coupled to the transport of aminophospholipids from the outer to the inner leaflet of various membranes and ensures the maintenance of asymmetric distribution of phospholipids. Phospholipid translocation also seems to be implicated in vesicle formation and in uptake of lipid signaling molecules. The sequence is that of Probable phospholipid-transporting ATPase IM (ATP8B4) from Homo sapiens (Human).